A 66-amino-acid polypeptide reads, in one-letter code: UPF0337 protein BP1738 (66 aa).

This sequence belongs to the UPF0337 (CsbD) family.

This is UPF0337 protein BP1738 from Bordetella pertussis (strain Tohama I / ATCC BAA-589 / NCTC 13251).